The chain runs to 406 residues: High mobility group nucleosome-binding domain-containing protein 5 (406 aa).

Positions 1–406 are disordered; that stretch reads MPKRKAAGDV…GEKEEPLSIV (406 aa). T29 bears the Phosphothreonine mark. The segment covering 35 to 44 has biased composition (basic residues); the sequence is KRASTSRKTK. 5 stretches are compositionally biased toward basic and acidic residues: residues 63–72, 92–101, 110–126, 136–159, and 166–187; these read TKPEDVKDEC, MEAEEVKEQI, GEKKEAVAAEAKDDELK, EDGKEHKDTGEEVEDGKIEEEGLN, and KSEDAEVSKDEEEKGDNEKGED. K64 participates in a covalent cross-link: Glycyl lysine isopeptide (Lys-Gly) (interchain with G-Cter in SUMO2). K98 participates in a covalent cross-link: Glycyl lysine isopeptide (Lys-Gly) (interchain with G-Cter in SUMO1); alternate. Residue K98 forms a Glycyl lysine isopeptide (Lys-Gly) (interchain with G-Cter in SUMO2); alternate linkage. K121 is covalently cross-linked (Glycyl lysine isopeptide (Lys-Gly) (interchain with G-Cter in SUMO2)). A compositionally biased stretch (acidic residues) spans 188–200; the sequence is GKEEGDEKEEEKD. 4 stretches are compositionally biased toward basic and acidic residues: residues 201–239, 246–266, 272–284, and 290–311; these read DKEGDTGTEKEVKEQNKEAEEDDGKCKEEENKEVGKEGQ, EDLHEEVGKEDLHEEDGKEGQ, KEIHHEEDGKEGQ, and KEYLHEEDGEEGQPKEDQKEGQ. Residues 312–325 are compositionally biased toward acidic residues; sequence PEEDGKEDQPEEDG. A compositionally biased stretch (basic and acidic residues) spans 326-365; that stretch reads KEGQCKEDGKEGHHEEGGKEDLHEEDGKEKDGGKEDRKEE. Residues 366–376 are compositionally biased toward acidic residues; it reads GEQEVAVDEGS. The span at 377–406 shows a compositional bias: basic and acidic residues; that stretch reads DENKVEAEEEGAENKDFKQDGEKEEPLSIV.

It belongs to the HMGN family. As to expression, expressed in liver, spleen, lung, heart, kidney, muscle and brain (at protein level). Widely expressed with highest levels in submaxillary gland, thymus, kidney and liver and lowest levels in brain, lung, pancreas and eye.

The protein resides in the nucleus. In terms of biological role, preferentially binds to euchromatin and modulates cellular transcription by counteracting linker histone-mediated chromatin compaction. The chain is High mobility group nucleosome-binding domain-containing protein 5 (Hmgn5) from Mus musculus (Mouse).